The following is a 303-amino-acid chain: Phospholipase A1 2 (303 aa).

A disulfide bridge connects residues Cys6 and Cys90. Residue Ser140 is the Nucleophile of the active site. Asp168 serves as the catalytic Charge relay system. A disulfide bridge connects residues Cys179 and Cys184. Catalysis depends on His232, which acts as the Charge relay system. 3 disulfides stabilise this stretch: Cys247-Cys271, Cys248-Cys296, and Cys264-Cys269.

This sequence belongs to the AB hydrolase superfamily. Lipase family. In terms of tissue distribution, expressed by the venom gland.

It localises to the secreted. It carries out the reaction a 1,2-diacyl-sn-glycero-3-phosphocholine + H2O = a 2-acyl-sn-glycero-3-phosphocholine + a fatty acid + H(+). Its function is as follows. Catalyzes the hydrolysis of phosphatidylcholine with phospholipase A1 activity. May act as an allergen and induce hemolytic activity. The chain is Phospholipase A1 2 from Dolichovespula maculata (Bald-faced hornet).